The following is a 72-amino-acid chain: Mitochondrial import protein 2 (72 aa).

Residues 1-22 (MAEVLDLEIDPISDGEDDTYSS) form a disordered region. Residues 1–34 (MAEVLDLEIDPISDGEDDTYSSELDDDLKDSIEQ) lie on the Cytoplasmic side of the membrane. Residues 35–52 (LERVLCLVVFPLLGKFLG) form a helical membrane-spanning segment. Residues 53–72 (RKFAFHAWARWLERRRLVSN) are Mitochondrial intermembrane-facing.

This sequence belongs to the MIM2 family. Component of the mitochondrial outer import machinery (MIM) complex containing at least mim1 and mim2. Interacts with mim1. Interacts with mitophagy receptor atg43.

The protein resides in the mitochondrion outer membrane. Component of the mitochondrial outer import machinery (MIM) complex that mediates transport of proteins into mitochondrial compartments. Promotes the insertion of tom70 into the outer mitochondrial membrane. Promotes the insertion of atg43 into the outer mitochondrial membrane. Involved in import of the subset of proteins with multiple alpha-helical transmembrane segments. The chain is Mitochondrial import protein 2 from Schizosaccharomyces pombe (strain 972 / ATCC 24843) (Fission yeast).